Here is a 155-residue protein sequence, read N- to C-terminus: Transcriptional repressor NrdR (155 aa).

The segment at 3–34 (CPYCGHLEDRVVDSRETQDGQATRRRRACLSC) is a zinc-finger region. An ATP-cone domain is found at 49–139 (PQVVKKDGRR…VYRAFRDVGE (91 aa)).

The protein belongs to the NrdR family. Zn(2+) is required as a cofactor.

In terms of biological role, negatively regulates transcription of bacterial ribonucleotide reductase nrd genes and operons by binding to NrdR-boxes. This Anaeromyxobacter dehalogenans (strain 2CP-1 / ATCC BAA-258) protein is Transcriptional repressor NrdR.